We begin with the raw amino-acid sequence, 736 residues long: Probable potassium transport system protein Kup 2 (736 aa).

The next 12 helical transmembrane spans lie at 1–21 (MAIV…LYTA), 42–62 (MLSL…VLIA), 84–104 (GAWL…DSVL), 126–146 (LFDE…VILF), 156–176 (IGKV…IVGV), 204–224 (AAGI…EALY), 239–259 (WPFI…WMLA), 287–307 (AVIL…TGAF), 334–354 (LYIP…LAIF), 364–384 (YGLA…VYLW), 390–410 (VGAI…FIAS), and 414–434 (FLHG…VMYT). Disordered regions lie at residues 649–678 (TDTA…DTTS) and 693–736 (AEAR…KQKR). Composition is skewed to low complexity over residues 660 to 677 (PTRA…MDTT) and 700 to 709 (EAAAADAPAE). The segment covering 710–721 (QGDKGDKGKAEN) has biased composition (basic and acidic residues).

Belongs to the HAK/KUP transporter (TC 2.A.72) family.

Its subcellular location is the cell membrane. The enzyme catalyses K(+)(in) + H(+)(in) = K(+)(out) + H(+)(out). In terms of biological role, transport of potassium into the cell. Likely operates as a K(+):H(+) symporter. The polypeptide is Probable potassium transport system protein Kup 2 (Bifidobacterium longum (strain NCC 2705)).